Consider the following 166-residue polypeptide: Small ribosomal subunit protein uS5 (166 aa).

In terms of domain architecture, S5 DRBM spans 12 to 75 (YIEKLVQVNR…EAARRNMIQV (64 aa)).

It belongs to the universal ribosomal protein uS5 family. Part of the 30S ribosomal subunit. Contacts proteins S4 and S8.

Its function is as follows. With S4 and S12 plays an important role in translational accuracy. Functionally, located at the back of the 30S subunit body where it stabilizes the conformation of the head with respect to the body. In Azotobacter vinelandii (strain DJ / ATCC BAA-1303), this protein is Small ribosomal subunit protein uS5.